A 2144-amino-acid chain; its full sequence is Reducing polyketide synthase PKS2 (2144 aa).

The Ketosynthase family 3 (KS3) domain maps to 10–436 (PMPLAIIGMS…GSNSHCIVRA (427 aa)). Catalysis depends on for beta-ketoacyl synthase activity residues Cys-183, His-319, and His-360. The tract at residues 538–855 (VFAFTGQGAQ…VPSLHRGQNA (318 aa)) is malonyl-CoA:ACP transacylase (MAT). An N-terminal hotdog fold region spans residues 924–1058 (HDLLGSINSS…ALVKCEATTD (135 aa)). The interval 924–1214 (HDLLGSINSS…RSYSIDGTTD (291 aa)) is dehydratase (DH) domain. Positions 924–1237 (HDLLGSINSS…LAVEATLAPQ (314 aa)) constitute a PKS/mFAS DH domain. Residues 1076-1237 (HSCVGSPLLY…LAVEATLAPQ (162 aa)) form a C-terminal hotdog fold region. The enoyl reductase (ER) domain stretch occupies residues 1461–1747 (GMPDSLYLQR…SETDSKKLLL (287 aa)). Residues 1771-1948 (AVYLLVGGSG…PATSLALTAV (178 aa)) are ketoreductase (KR) domain. One can recognise a Carrier domain in the interval 2059–2136 (EATQLLLAAI…KIVDSVIVKR (78 aa)). At Ser-2096 the chain carries O-(pantetheine 4'-phosphoryl)serine.

Its pathway is mycotoxin biosynthesis. Reducing polyketide synthase (PKS); part of the Tox1A locus, one of the 2 loci that mediate the biosynthesis of T-toxin, a family of linear polyketides 37 to 45 carbons in length, of which the major component is 41 carbons, and which leads to high virulence to maize. One of the PKSs (PKS1 or PKS2) could synthesize a precursor, used subsequently by the other PKS as starter unit, to add additional carbons. Variability in the length of the final carbon backbone C35-47 could be achieved by varying the number of condensation cycles, or use of different starter or extender units or might be due to decarboxylation of the penultimate product, catalyzed by DEC1. Additional proteins are required for the biosynthesis of T-toxin, including oxidoreductases RED1, RED2, RED3, LAM1 and OXI1, as well as esterase TOX9. This chain is Reducing polyketide synthase PKS2, found in Cochliobolus heterostrophus (strain C4 / ATCC 48331 / race T) (Southern corn leaf blight fungus).